Consider the following 563-residue polypeptide: NAD(P)H-quinone oxidoreductase chain 4 (563 aa).

Transmembrane regions (helical) follow at residues 25-45 (FPWL…VPFI), 56-76 (WFAL…YLYG), 90-110 (VSWL…ISMP), 111-131 (LILL…PVTF), 133-153 (PKLF…VFAV), 157-177 (LLFF…LAIW), 189-209 (FIIY…AMGF), 230-250 (GFQL…LPIV), 264-284 (TAPV…YALM), 298-318 (FAPL…LTSF), 335-355 (MGFV…GAML), 356-376 (QMIS…ATYD), 397-417 (FALW…SGFV), 438-458 (IVIA…LLSM), and 485-505 (VYII…PRLM).

The protein belongs to the complex I subunit 4 family.

It localises to the cellular thylakoid membrane. It catalyses the reaction a plastoquinone + NADH + (n+1) H(+)(in) = a plastoquinol + NAD(+) + n H(+)(out). The catalysed reaction is a plastoquinone + NADPH + (n+1) H(+)(in) = a plastoquinol + NADP(+) + n H(+)(out). Functionally, NDH-1 shuttles electrons from NAD(P)H, via FMN and iron-sulfur (Fe-S) centers, to quinones in the respiratory chain. The immediate electron acceptor for the enzyme in this species is believed to be plastoquinone. Couples the redox reaction to proton translocation (for every two electrons transferred, four hydrogen ions are translocated across the cytoplasmic membrane), and thus conserves the redox energy in a proton gradient. This is NAD(P)H-quinone oxidoreductase chain 4 from Prochlorococcus marinus (strain MIT 9313).